The sequence spans 49 residues: Large ribosomal subunit protein eL40 (49 aa).

Belongs to the eukaryotic ribosomal protein eL40 family.

The polypeptide is Large ribosomal subunit protein eL40 (Halorubrum lacusprofundi (strain ATCC 49239 / DSM 5036 / JCM 8891 / ACAM 34)).